We begin with the raw amino-acid sequence, 555 residues long: 1,3-beta-glucanosyltransferase GAS2 (555 aa).

The first 24 residues, Met1–Gly24, serve as a signal peptide directing secretion. Cysteines 89 and 118 form a disulfide. Residues Tyr107, Ser134 to Arg142, Asn175, Glu176, Asp217, and Arg222 each bind (1,3-beta-D-glucosyl)n. Residue Glu176 is the Proton donor of the active site. 6 cysteine pairs are disulfide-bonded: Cys231–Cys367, Cys247–Cys278, Cys390–Cys442, Cys392–Cys489, Cys399–Cys466, and Cys419–Cys424. The active-site Nucleophile is the Glu275. Tyr307 lines the (1,3-beta-D-glucosyl)n pocket. N-linked (GlcNAc...) asparagine glycosylation occurs at Asn498. Residue Asp531 is the site of GPI-anchor amidated aspartate attachment. The propeptide at Gly532–Leu555 is removed in mature form.

Belongs to the glycosyl hydrolase 72 family. In terms of processing, N-glycosylated.

Its subcellular location is the cell membrane. In terms of biological role, splits internally a 1,3-beta-glucan molecule and transfers the newly generated reducing end (the donor) to the non-reducing end of another 1,3-beta-glucan molecule (the acceptor) forming a 1,3-beta linkage, resulting in the elongation of 1,3-beta-glucan chains in the cell wall. Involved in spore wall assembly. The sequence is that of 1,3-beta-glucanosyltransferase GAS2 (GAS2) from Saccharomyces cerevisiae (strain ATCC 204508 / S288c) (Baker's yeast).